We begin with the raw amino-acid sequence, 57 residues long: Small hydrophobic protein (57 aa).

At M1–L8 the chain is on the virion surface side. Residues Y9–I29 form a helical membrane-spanning segment. Topologically, residues S30 to L57 are intravirion.

This sequence belongs to the rubulavirus small hydrophobic protein family. As to quaternary structure, interacts with host TNFRSF1A, RIPK1 and IRAK1; these interactions interfere with host NF-kappa-B activation at the level of receptor complexes. Interacts with host protein UBQLN4.

The protein localises to the virion membrane. It localises to the host cell membrane. Its function is as follows. Plays a role in the inhibition of the host NF-kappa-B pathway. This inhibition occurs at the receptor level, by preventing the signaling of TNFR1 as well as IL-1R and TLR3. The polypeptide is Small hydrophobic protein (SH) (Homo sapiens (Human)).